Here is a 283-residue protein sequence, read N- to C-terminus: 2-dehydro-3-deoxyphosphooctonate aldolase (283 aa).

Belongs to the KdsA family.

The protein localises to the cytoplasm. It catalyses the reaction D-arabinose 5-phosphate + phosphoenolpyruvate + H2O = 3-deoxy-alpha-D-manno-2-octulosonate-8-phosphate + phosphate. It functions in the pathway carbohydrate biosynthesis; 3-deoxy-D-manno-octulosonate biosynthesis; 3-deoxy-D-manno-octulosonate from D-ribulose 5-phosphate: step 2/3. It participates in bacterial outer membrane biogenesis; lipopolysaccharide biosynthesis. The chain is 2-dehydro-3-deoxyphosphooctonate aldolase from Synechococcus sp. (strain WH7803).